Consider the following 505-residue polypeptide: Deoxyguanosinetriphosphate triphosphohydrolase (505 aa).

Residues R66–C273 form the HD domain.

The protein belongs to the dGTPase family. Type 1 subfamily. In terms of assembly, homotetramer. Mg(2+) is required as a cofactor.

It carries out the reaction dGTP + H2O = 2'-deoxyguanosine + triphosphate + H(+). In terms of biological role, dGTPase preferentially hydrolyzes dGTP over the other canonical NTPs. This is Deoxyguanosinetriphosphate triphosphohydrolase from Shigella boydii serotype 18 (strain CDC 3083-94 / BS512).